A 189-amino-acid chain; its full sequence is Elongation factor P (189 aa).

It belongs to the elongation factor P family.

The protein resides in the cytoplasm. It functions in the pathway protein biosynthesis; polypeptide chain elongation. Its function is as follows. Involved in peptide bond synthesis. Stimulates efficient translation and peptide-bond synthesis on native or reconstituted 70S ribosomes in vitro. Probably functions indirectly by altering the affinity of the ribosome for aminoacyl-tRNA, thus increasing their reactivity as acceptors for peptidyl transferase. The sequence is that of Elongation factor P from Campylobacter fetus subsp. fetus (strain 82-40).